A 161-amino-acid polypeptide reads, in one-letter code: Protein-export protein SecB (161 aa).

This sequence belongs to the SecB family. In terms of assembly, homotetramer, a dimer of dimers. One homotetramer interacts with 1 SecA dimer.

It is found in the cytoplasm. Its function is as follows. One of the proteins required for the normal export of preproteins out of the cell cytoplasm. It is a molecular chaperone that binds to a subset of precursor proteins, maintaining them in a translocation-competent state. It also specifically binds to its receptor SecA. The polypeptide is Protein-export protein SecB (Coxiella burnetii (strain Dugway 5J108-111)).